Consider the following 281-residue polypeptide: Putative phosphoenolpyruvate synthase regulatory protein (281 aa).

An ADP-binding site is contributed by 161-168; sequence GVSRSGKT.

This sequence belongs to the pyruvate, phosphate/water dikinase regulatory protein family. PSRP subfamily.

It carries out the reaction [pyruvate, water dikinase] + ADP = [pyruvate, water dikinase]-phosphate + AMP + H(+). The catalysed reaction is [pyruvate, water dikinase]-phosphate + phosphate + H(+) = [pyruvate, water dikinase] + diphosphate. Functionally, bifunctional serine/threonine kinase and phosphorylase involved in the regulation of the phosphoenolpyruvate synthase (PEPS) by catalyzing its phosphorylation/dephosphorylation. The sequence is that of Putative phosphoenolpyruvate synthase regulatory protein from Herminiimonas arsenicoxydans.